We begin with the raw amino-acid sequence, 444 residues long: 3-phosphoshikimate 1-carboxyvinyltransferase (444 aa).

Lys32, Ser33, and Arg37 together coordinate 3-phosphoshikimate. Lys32 provides a ligand contact to phosphoenolpyruvate. Gly105 and Arg133 together coordinate phosphoenolpyruvate. 3-phosphoshikimate is bound by residues Ser178, Gln180, Asp326, and Lys353. Gln180 lines the phosphoenolpyruvate pocket. Asp326 acts as the Proton acceptor in catalysis. Phosphoenolpyruvate contacts are provided by Arg357 and Arg398.

It belongs to the EPSP synthase family. As to quaternary structure, monomer.

It is found in the cytoplasm. It carries out the reaction 3-phosphoshikimate + phosphoenolpyruvate = 5-O-(1-carboxyvinyl)-3-phosphoshikimate + phosphate. It functions in the pathway metabolic intermediate biosynthesis; chorismate biosynthesis; chorismate from D-erythrose 4-phosphate and phosphoenolpyruvate: step 6/7. In terms of biological role, catalyzes the transfer of the enolpyruvyl moiety of phosphoenolpyruvate (PEP) to the 5-hydroxyl of shikimate-3-phosphate (S3P) to produce enolpyruvyl shikimate-3-phosphate and inorganic phosphate. The sequence is that of 3-phosphoshikimate 1-carboxyvinyltransferase from Nitrosococcus oceani (strain ATCC 19707 / BCRC 17464 / JCM 30415 / NCIMB 11848 / C-107).